A 65-amino-acid polypeptide reads, in one-letter code: uncharacterized protein (65 aa).

This is an uncharacterized protein from Bacillus subtilis (strain 168).